A 381-amino-acid chain; its full sequence is Dihydroorotate dehydrogenase (quinone) (381 aa).

Residues 77-81 (AGCDK) and A101 contribute to the FMN site. K81 contacts substrate. Residue 126–129 (NRLG) coordinates substrate. Residues N158 and N191 each coordinate FMN. N191 contributes to the substrate binding site. Residue S194 is the Nucleophile of the active site. Position 196 (N196) interacts with substrate. 2 residues coordinate FMN: K229 and T257. Residue 258–259 (NT) coordinates substrate. FMN is bound by residues G287, G316, and 337–338 (YT).

Belongs to the dihydroorotate dehydrogenase family. Type 2 subfamily. Monomer. Requires FMN as cofactor.

The protein resides in the cell membrane. The enzyme catalyses (S)-dihydroorotate + a quinone = orotate + a quinol. It participates in pyrimidine metabolism; UMP biosynthesis via de novo pathway; orotate from (S)-dihydroorotate (quinone route): step 1/1. Functionally, catalyzes the conversion of dihydroorotate to orotate with quinone as electron acceptor. The sequence is that of Dihydroorotate dehydrogenase (quinone) (pyrD) from Synechocystis sp. (strain ATCC 27184 / PCC 6803 / Kazusa).